Here is a 70-residue protein sequence, read N- to C-terminus: DNA-directed RNA polymerase subunit omega (70 aa).

It belongs to the RNA polymerase subunit omega family. In terms of assembly, in cyanobacteria the RNAP catalytic core is composed of 2 alpha, 1 beta, 1 beta', 1 gamma and 1 omega subunit. When a sigma factor is associated with the core the holoenzyme is formed, which can initiate transcription.

It carries out the reaction RNA(n) + a ribonucleoside 5'-triphosphate = RNA(n+1) + diphosphate. Promotes RNA polymerase assembly. Latches the N- and C-terminal regions of the beta' subunit thereby facilitating its interaction with the beta and alpha subunits. In Prochlorococcus marinus (strain NATL1A), this protein is DNA-directed RNA polymerase subunit omega.